The following is a 197-amino-acid chain: Large ribosomal subunit protein eL15 (197 aa).

Basic residues predominate over residues 163-172; it reads GKTSAGRKGR. The segment at 163 to 197 is disordered; it reads GKTSAGRKGRGMQTRGTGTEKTRPSVRSNLNRSKK. Residues 186–197 are compositionally biased toward polar residues; sequence PSVRSNLNRSKK.

This sequence belongs to the eukaryotic ribosomal protein eL15 family.

This chain is Large ribosomal subunit protein eL15, found in Methanococcoides burtonii (strain DSM 6242 / NBRC 107633 / OCM 468 / ACE-M).